We begin with the raw amino-acid sequence, 944 residues long: 2-oxoglutarate dehydrogenase E1 component (944 aa).

The segment at 914-944 (RRRRSSPAEGDPTVHKKEQERIVSDSLTRKN) is disordered. A compositionally biased stretch (basic and acidic residues) spans 925 to 936 (PTVHKKEQERIV).

It belongs to the alpha-ketoglutarate dehydrogenase family. As to quaternary structure, homodimer. Part of the 2-oxoglutarate dehydrogenase (OGDH) complex composed of E1 (2-oxoglutarate dehydrogenase), E2 (dihydrolipoamide succinyltransferase) and E3 (dihydrolipoamide dehydrogenase); the complex contains multiple copies of the three enzymatic components (E1, E2 and E3). Thiamine diphosphate is required as a cofactor.

The catalysed reaction is N(6)-[(R)-lipoyl]-L-lysyl-[protein] + 2-oxoglutarate + H(+) = N(6)-[(R)-S(8)-succinyldihydrolipoyl]-L-lysyl-[protein] + CO2. E1 component of the 2-oxoglutarate dehydrogenase (OGDH) complex which catalyzes the decarboxylation of 2-oxoglutarate, the first step in the conversion of 2-oxoglutarate to succinyl-CoA and CO(2). The protein is 2-oxoglutarate dehydrogenase E1 component of Bacillus licheniformis (strain ATCC 14580 / DSM 13 / JCM 2505 / CCUG 7422 / NBRC 12200 / NCIMB 9375 / NCTC 10341 / NRRL NRS-1264 / Gibson 46).